The following is a 443-amino-acid chain: Carboxypeptidase M (443 aa).

The N-terminal stretch at 1–17 is a signal peptide; it reads MDRARLWLGLLLPVVAA. The Peptidase M14 domain maps to 21-311; sequence RYHHQEGMEA…ASLIEYIKQV (291 aa). N38 carries N-linked (GlcNAc...) asparagine glycosylation. Positions 83 and 86 each coordinate Zn(2+). Cystine bridges form between C138-C285, C242-C284, and C341-C410. A glycan (N-linked (GlcNAc...) asparagine) is linked at N164. H190 is a binding site for Zn(2+). Catalysis depends on E281, which acts as the Proton donor/acceptor. N363 carries an N-linked (GlcNAc...) asparagine glycan. S423 is lipidated: GPI-anchor amidated serine. The propeptide at 424-443 is removed in mature form; that stretch reads AATKPSLGVFFMTLLYVFFK.

The protein belongs to the peptidase M14 family. Zn(2+) is required as a cofactor.

Its subcellular location is the cell membrane. The enzyme catalyses Cleavage of C-terminal arginine or lysine residues from polypeptides.. In terms of biological role, specifically removes C-terminal basic residues (Arg or Lys) from peptides and proteins. It is believed to play important roles in the control of peptide hormone and growth factor activity at the cell surface, and in the membrane-localized degradation of extracellular proteins. The protein is Carboxypeptidase M (Cpm) of Mus musculus (Mouse).